Consider the following 445-residue polypeptide: Transcription termination factor MTERF15, mitochondrial (445 aa).

A mitochondrion-targeting transit peptide spans 1-25 (MASKLKTFINLRDYPITLFNQIRSL).

This sequence belongs to the mTERF family.

Its subcellular location is the mitochondrion. In terms of biological role, transcription termination factor required for mitochondrial NAD2 intron 3 splicing and normal membrane respiratory chain Complex I activity. Essential for normal plant growth and development. Binds to RNA but not to double-stranded DNA. This is Transcription termination factor MTERF15, mitochondrial from Arabidopsis thaliana (Mouse-ear cress).